Here is a 170-residue protein sequence, read N- to C-terminus: ATP synthase subunit b (170 aa).

Residues 5 to 25 (YFIPCLLLPTMMLASGGGGET) form a helical membrane-spanning segment.

The protein belongs to the ATPase B chain family. In terms of assembly, F-type ATPases have 2 components, F(1) - the catalytic core - and F(0) - the membrane proton channel. F(1) has five subunits: alpha(3), beta(3), gamma(1), delta(1), epsilon(1). F(0) has three main subunits: a(1), b(2) and c(10-14). The alpha and beta chains form an alternating ring which encloses part of the gamma chain. F(1) is attached to F(0) by a central stalk formed by the gamma and epsilon chains, while a peripheral stalk is formed by the delta and b chains.

It localises to the cell inner membrane. Its function is as follows. F(1)F(0) ATP synthase produces ATP from ADP in the presence of a proton or sodium gradient. F-type ATPases consist of two structural domains, F(1) containing the extramembraneous catalytic core and F(0) containing the membrane proton channel, linked together by a central stalk and a peripheral stalk. During catalysis, ATP synthesis in the catalytic domain of F(1) is coupled via a rotary mechanism of the central stalk subunits to proton translocation. In terms of biological role, component of the F(0) channel, it forms part of the peripheral stalk, linking F(1) to F(0). In Wolinella succinogenes (strain ATCC 29543 / DSM 1740 / CCUG 13145 / JCM 31913 / LMG 7466 / NCTC 11488 / FDC 602W) (Vibrio succinogenes), this protein is ATP synthase subunit b.